Consider the following 184-residue polypeptide: ADP-ribosylation factor-like protein 8c (184 aa).

Positions Met-1–Gln-18 form an intramembrane region, note=Mediates targeting to membranes. Residues Asn-29–Ser-34, Met-48–Thr-51, Asp-70–Gln-74, and Asn-129–Asp-132 contribute to the GTP site.

This sequence belongs to the small GTPase superfamily. Arf family. In terms of assembly, interacts with tubulin.

It is found in the late endosome membrane. The protein localises to the lysosome membrane. The protein resides in the cytoplasm. Its subcellular location is the cytoskeleton. It localises to the spindle. Functionally, may play a role in lysosome motility. May play a role in chromosome segregation. (Microbial infection) Component of tomato mosaic virus (ToMV) RNA replication complexes. Required for tobamovirus multiplication, especially for efficient negative-strand RNA synthesis and viral RNA capping. The sequence is that of ADP-ribosylation factor-like protein 8c from Arabidopsis thaliana (Mouse-ear cress).